Consider the following 345-residue polypeptide: D-fructose 1,6-bisphosphatase class 2/sedoheptulose 1,7-bisphosphatase (345 aa).

4 residues coordinate Mn(2+): Asp-33, Glu-57, Asp-97, and Glu-100. Substrate is bound by residues 100-102, Tyr-131, 176-178, and 198-200; these read EGT, RPR, and DGD. Glu-225 contributes to the Mn(2+) binding site.

The protein belongs to the FBPase class 2 family. Homotetramer. Requires Mn(2+) as cofactor.

It catalyses the reaction beta-D-fructose 1,6-bisphosphate + H2O = beta-D-fructose 6-phosphate + phosphate. The catalysed reaction is D-sedoheptulose 1,7-bisphosphate + H2O = D-sedoheptulose 7-phosphate + phosphate. It functions in the pathway carbohydrate biosynthesis; Calvin cycle. Catalyzes the hydrolysis of fructose 1,6-bisphosphate (Fru 1,6-P2) and sedoheptulose 1,7-bisphosphate (Sed 1,7-P2) to fructose 6-phosphate and sedoheptulose 7-phosphate, respectively. This Trichodesmium erythraeum (strain IMS101) protein is D-fructose 1,6-bisphosphatase class 2/sedoheptulose 1,7-bisphosphatase.